We begin with the raw amino-acid sequence, 91 residues long: Cell division protein ZapA (91 aa).

Residues 59–86 (TAVNIANEYLKLKEEYDRLAAKLRREKG) are a coiled coil.

It belongs to the ZapA family. Type 2 subfamily. Homodimer. Interacts with FtsZ.

It is found in the cytoplasm. Functionally, activator of cell division through the inhibition of FtsZ GTPase activity, therefore promoting FtsZ assembly into bundles of protofilaments necessary for the formation of the division Z ring. It is recruited early at mid-cell but it is not essential for cell division. The chain is Cell division protein ZapA from Geobacillus thermodenitrificans (strain NG80-2).